Reading from the N-terminus, the 389-residue chain is Succinyl-diaminopimelate desuccinylase (389 aa).

His72 lines the Zn(2+) pocket. The active site involves Asp74. Asp105 lines the Zn(2+) pocket. The active-site Proton acceptor is Glu144. 3 residues coordinate Zn(2+): Glu145, Glu173, and His362.

This sequence belongs to the peptidase M20A family. DapE subfamily. In terms of assembly, homodimer. Requires Zn(2+) as cofactor. Co(2+) serves as cofactor.

The catalysed reaction is N-succinyl-(2S,6S)-2,6-diaminopimelate + H2O = (2S,6S)-2,6-diaminopimelate + succinate. Its pathway is amino-acid biosynthesis; L-lysine biosynthesis via DAP pathway; LL-2,6-diaminopimelate from (S)-tetrahydrodipicolinate (succinylase route): step 3/3. In terms of biological role, catalyzes the hydrolysis of N-succinyl-L,L-diaminopimelic acid (SDAP), forming succinate and LL-2,6-diaminopimelate (DAP), an intermediate involved in the bacterial biosynthesis of lysine and meso-diaminopimelic acid, an essential component of bacterial cell walls. The protein is Succinyl-diaminopimelate desuccinylase of Rhodopseudomonas palustris (strain HaA2).